The following is a 115-amino-acid chain: Basic leucine zipper transcriptional factor ATF-like (115 aa).

Residues 1–60 (MQQESDRNEQGYSSSPPSSNKQDSSDDTKKNHRREKNRIAAQKSRQRQTEKADSLHIESE) form a disordered region. The span at 13 to 22 (SSSPPSSNKQ) shows a compositional bias: low complexity. A bZIP domain is found at 27–90 (DTKKNHRREK…KYLTCVLSTH (64 aa)). The basic motif stretch occupies residues 29–51 (KKNHRREKNRIAAQKSRQRQTEK). Over residues 47–60 (RQTEKADSLHIESE) the composition is skewed to basic and acidic residues. The leucine-zipper stretch occupies residues 55-83 (LHIESENLERLNSALRGEISGLREELKYL).

Belongs to the bZIP family.

Its subcellular location is the nucleus. The protein localises to the cytoplasm. In terms of biological role, AP-1 family transcription factor that controls the differentiation of lineage-specific cells in the immune system: specifically mediates the differentiation of T-helper 17 cells (Th17), follicular T-helper cells (TfH), CD8(+) dendritic cells and class-switch recombination (CSR) in B-cells. The protein is Basic leucine zipper transcriptional factor ATF-like (batf) of Xenopus laevis (African clawed frog).